Consider the following 152-residue polypeptide: Ribosome maturation factor RimP (152 aa).

The protein belongs to the RimP family.

The protein localises to the cytoplasm. Functionally, required for maturation of 30S ribosomal subunits. This Pseudomonas aeruginosa (strain LESB58) protein is Ribosome maturation factor RimP.